Consider the following 353-residue polypeptide: 3-dehydroquinate synthase (353 aa).

NAD(+) is bound by residues 61-66 (DGEEAK), 119-120 (TT), Lys-132, and Lys-141. Zn(2+)-binding residues include Glu-174, His-238, and His-254.

The protein belongs to the sugar phosphate cyclases superfamily. Dehydroquinate synthase family. Co(2+) serves as cofactor. The cofactor is Zn(2+). It depends on NAD(+) as a cofactor.

It is found in the cytoplasm. The catalysed reaction is 7-phospho-2-dehydro-3-deoxy-D-arabino-heptonate = 3-dehydroquinate + phosphate. The protein operates within metabolic intermediate biosynthesis; chorismate biosynthesis; chorismate from D-erythrose 4-phosphate and phosphoenolpyruvate: step 2/7. Catalyzes the conversion of 3-deoxy-D-arabino-heptulosonate 7-phosphate (DAHP) to dehydroquinate (DHQ). This chain is 3-dehydroquinate synthase, found in Sulfolobus acidocaldarius (strain ATCC 33909 / DSM 639 / JCM 8929 / NBRC 15157 / NCIMB 11770).